Here is a 35-residue protein sequence, read N- to C-terminus: Alpha-amanitin proprotein 1 (35 aa).

Residues 1–10 (MFDTNATRLP) constitute a propeptide that is removed on maturation. Ile11 bears the (3R,4R)-4,5-dihydroxyisoleucine; in form alpha-amanitin mark. Ile11 is subject to (3R,4S)-4-hydroxyisoleucine; in form gamma-amanitin. A cross-link (cyclopeptide (Ile-Pro)) is located at residues 11-18 (IWGIGCNP). Positions 12-16 (WGIGC) form a cross-link, 2'-cysteinyl-6'-hydroxytryptophan sulfoxide (Trp-Cys). Pro18 carries the 4-hydroxyproline modification. A propeptide spanning residues 19-35 (WTAEHVDQTLASGNDIC) is cleaved from the precursor.

The protein belongs to the MSDIN fungal toxin family. In terms of processing, processed by the macrocyclase-peptidase enzyme POPB to yield a toxic bicyclic octapeptide. POPB first removes 10 residues from the N-terminus. Conformational trapping of the remaining peptide forces the enzyme to release this intermediate rather than proceed to macrocyclization. The enzyme rebinds the remaining peptide in a different conformation and catalyzes macrocyclization of the N-terminal 8 residues.

In terms of biological role, major toxin belonging to the bicyclic octapeptides amatoxins that acts by binding non-competitively to RNA polymerase II and greatly slowing the elongation of transcripts from target promoters. The protein is Alpha-amanitin proprotein 1 of Galerina marginata (strain CBS 339.88).